A 758-amino-acid chain; its full sequence is MDVNPTLLFLKVPAQNAISTTFPYTGDPPYSHGTGTGYTMDTVNRTHQYSEKGRWTTNTETGAPQLNPIDGPLPEDNEPSGYAQTDCVLEAMAFLEESHPGLFENSCLETMEVVQQTRMDKLTQGRQTYDWTLNRNQPAATALANTIEVFRSNGLTANESGRLIDFLKDVMESMDKEEMEITTHFQRKRRVRDNMTKKMVTQRTIGKKKQRLTKKSYLIRALTLNTMTKDAERGKLKRRAIATPGMQIRGFVHFVEALARSICEKLEQSGLPVGGNEKKAKLANVVRKMMTNSQDTELSFTVTGDNTKWNENQNPRIFLAMITYITRNQPEWFRNVLSIAPIMFSNKMARLGKGYMFESKSMKLRTQIPAEMLANIDLKYFNESTRKKIEKIRPLLVEGTASLSPGMMMGMFNMLSTVLGVSILNLGQKRYTKTTYWWDGLQSSDDFALIVNAPNHEGIQAGVDRFYRTCKLVGINMSKKKSYINRTGTFEFTSFFYRYGFVANFSMELPSFGVSGINESADMSIGVTVIKNNMINNDLGPATAQMALQLFIKDYRYTYRCHRGDTQIQTRRSFELKKLWEQTRSKAGLLVSDGGPNLYNIRNLHIPEVGLKWELMDEDYQGRLCNPLNPFVSHKEVESVNNAVVMPAHGPAKSMEYDAVATTHSWIPKRNRSILNTSQRGILEDEQMYQKCCTLFEKFFPSSSYRRPVGISSMMEAMVSRARIDARIDFESGRIKKEEFAEILKICSTIEELGRQGK.

The disordered stretch occupies residues Gly-53 to Tyr-82. Over residues Trp-55–Pro-64 the composition is skewed to polar residues. Short sequence motifs (nuclear localization signal) lie at residues Arg-187–Met-195 and Arg-203–Ser-216. A promoter-binding site region spans residues Arg-249–Glu-256. One can recognise a RdRp catalytic domain in the interval Val-286 to Tyr-483.

Belongs to the influenza viruses polymerase PB1 family. Influenza RNA polymerase is composed of three subunits: PB1, PB2 and PA. Interacts (via N-terminus) with PA (via C-terminus). Interacts (via C-terminus) with PB2 (via N-terminus); this interaction is essential for transcription initiation. Post-translationally, phosphorylated by host PRKCA.

It is found in the host nucleus. Its subcellular location is the host cytoplasm. The catalysed reaction is RNA(n) + a ribonucleoside 5'-triphosphate = RNA(n+1) + diphosphate. In terms of biological role, RNA-dependent RNA polymerase which is responsible for replication and transcription of virus RNA segments. The transcription of viral mRNAs occurs by a unique mechanism called cap-snatching. 5' methylated caps of cellular mRNAs are cleaved after 10-13 nucleotides by PA. In turn, these short capped RNAs are used as primers by PB1 for transcription of viral mRNAs. During virus replication, PB1 initiates RNA synthesis and copy vRNA into complementary RNA (cRNA) which in turn serves as a template for the production of more vRNAs. The polypeptide is RNA-directed RNA polymerase catalytic subunit (Aves (Cat)).